The sequence spans 547 residues: Glucose-6-phosphate isomerase (547 aa).

The Proton donor role is filled by glutamate 351. Catalysis depends on residues histidine 382 and lysine 509.

Belongs to the GPI family.

The protein localises to the cytoplasm. It carries out the reaction alpha-D-glucose 6-phosphate = beta-D-fructose 6-phosphate. It participates in carbohydrate biosynthesis; gluconeogenesis. Its pathway is carbohydrate degradation; glycolysis; D-glyceraldehyde 3-phosphate and glycerone phosphate from D-glucose: step 2/4. Functionally, catalyzes the reversible isomerization of glucose-6-phosphate to fructose-6-phosphate. In Coxiella burnetii (strain RSA 493 / Nine Mile phase I), this protein is Glucose-6-phosphate isomerase.